The sequence spans 1523 residues: Dicer-like protein 1 (1523 aa).

A compositionally biased stretch (polar residues) spans 24-38 (LNLSGERTISTTEPT). Residues 24–58 (LNLSGERTISTTEPTEGNDSSSEESGDNEQISTQR) form a disordered region. Residues 123-304 (LFERAKSQNT…ESATKLEVLL (182 aa)) enclose the Helicase ATP-binding domain. ATP is bound at residue 136–143 (LDTGSGKT). The DEAH box signature appears at 249-252 (DEAH). One can recognise a Helicase C-terminal domain in the interval 444-617 (LLRQKLIKYF…GIDSEIDSIL (174 aa)). In terms of domain architecture, Dicer dsRNA-binding fold spans 640-730 (ALAILARYAS…NSVYHRRLPA (91 aa)). A PAZ domain is found at 879–1007 (ELLHLVHENE…VCIEPLRISA (129 aa)). 2 RNase III domains span residues 1031-1190 (IALE…LSGG) and 1241-1392 (GRKV…VDSD). 3 residues coordinate Mg(2+): Glu1281, Asp1378, and Glu1381. The DRBM domain occupies 1426–1494 (TFLQNRLTNE…SEKALSVLEN (69 aa)). Residues Cys1438, His1465, Cys1506, and Cys1508 each contribute to the Zn(2+) site.

This sequence belongs to the helicase family. Dicer subfamily. Requires Mg(2+) as cofactor. Mn(2+) is required as a cofactor.

Dicer-like endonuclease involved in cleaving double-stranded RNA in the RNA interference (RNAi) pathway. Produces 21 to 25 bp dsRNAs (siRNAs) which target the selective destruction of homologous RNAs leading to sequence-specific suppression of gene expression, called post-transcriptional gene silencing (PTGS). Part of a broad host defense response against viral infection and transposons. The protein is Dicer-like protein 1 (dcl1) of Aspergillus oryzae (strain ATCC 42149 / RIB 40) (Yellow koji mold).